The sequence spans 1197 residues: Serine/threonine-protein kinase pakA (1197 aa).

5 disordered regions span residues 1–96 (MEEK…PIYR), 328–383 (QKED…KNID), 430–468 (REEEEENEDRVERELASRRRQEEDRIKREEEEEEEEQRN), 485–543 (EEEE…NLMG), and 562–819 (NSSG…RVGT). Positions 19 to 30 (QKFEQFLDKTDK) are enriched in basic and acidic residues. Over residues 34–49 (ATRNNYRGPVSSSTGI) the composition is skewed to polar residues. The span at 51–69 (NDKEKKSHSYFKVREEGSN) shows a compositional bias: basic and acidic residues. Polar residues predominate over residues 70 to 79 (KRPSSFSASN). 2 stretches are compositionally biased toward low complexity: residues 80–94 (PITPSSPQSTHSSPI) and 346–381 (NNNNNENNENDNNNNNNNNNNNNNNNNNNNNNNNKN). Residues 439-458 (RVERELASRRRQEEDRIKRE) are compositionally biased toward basic and acidic residues. The segment covering 494–523 (SQLQSSQQQQKSSSTQRSSNTVTSTSSSST) has biased composition (low complexity). Polar residues predominate over residues 524–536 (GGDSNPSTSQKPT). Thr585 is subject to Phosphothreonine; by PKB. The segment covering 593–615 (SENTPLVSSIDNNGVNNKMSRSH) has biased composition (polar residues). 2 stretches are compositionally biased toward low complexity: residues 636–653 (NVNNSNNNNNNNNINNNH) and 671–707 (SSSMSTPSISPSQAGNSATSTVPSSPISASTSMSSPT). The segment covering 718 to 727 (TTSTGSTRKG) has biased composition (polar residues). Positions 728–737 (SISEREDKKK) are enriched in basic and acidic residues. Over residues 739-756 (SSSSTSSSSSSNGGLSSS) the composition is skewed to low complexity. The span at 757 to 790 (GKDHKKDHSSEEKEKEKKSFFNKLFSKEKKDHHS) shows a compositional bias: basic and acidic residues. Residues 817 to 830 (VGTPFNVKHDVHVN) form the CRIB domain. One can recognise a Protein kinase domain in the interval 911–1164 (YYNINKIGEG…SSSLLHHPFL (254 aa)). ATP-binding positions include 917–925 (IGEGGAGEV) and Lys940. Asp1032 functions as the Proton acceptor in the catalytic mechanism.

Belongs to the protein kinase superfamily. STE Ser/Thr protein kinase family. STE20 subfamily. Requires Mg(2+) as cofactor. In terms of processing, phosphorylation on Thr-585 results in cAMP-mediated activation and localization to the cytoskeleton. In terms of tissue distribution, colocalizes with myosin II to the cleavage furrow of cells undergoing cytokinesis and the posterior cortex of polarized cells.

The protein localises to the cytoplasm. It localises to the cytosol. It is found in the cytoskeleton. It catalyses the reaction L-seryl-[protein] + ATP = O-phospho-L-seryl-[protein] + ADP + H(+). The catalysed reaction is L-threonyl-[protein] + ATP = O-phospho-L-threonyl-[protein] + ADP + H(+). Functionally, regulator of the myosin II component of the cytoskeleton: required for regulation of cytokinesis. Functions during chemotaxis, required for maintaining the direction of cell movement, suppressing lateral pseudopod extension, and proper retraction of the posterior of chemotaxing cells. The protein is Serine/threonine-protein kinase pakA (pakA) of Dictyostelium discoideum (Social amoeba).